A 145-amino-acid polypeptide reads, in one-letter code: Large ribosomal subunit protein uL16 (145 aa).

Belongs to the universal ribosomal protein uL16 family. In terms of assembly, part of the 50S ribosomal subunit.

Binds 23S rRNA and is also seen to make contacts with the A and possibly P site tRNAs. The protein is Large ribosomal subunit protein uL16 of Lachnospira eligens (strain ATCC 27750 / DSM 3376 / VPI C15-48 / C15-B4) (Eubacterium eligens).